A 340-amino-acid polypeptide reads, in one-letter code: Glycerol-3-phosphate dehydrogenase [NAD(P)+] (340 aa).

Residues serine 14, phenylalanine 15, arginine 35, and lysine 108 each coordinate NADPH. Residues lysine 108 and glycine 136 each contribute to the sn-glycerol 3-phosphate site. Alanine 140 contacts NADPH. The sn-glycerol 3-phosphate site is built by lysine 191, aspartate 244, serine 254, arginine 255, and asparagine 256. Lysine 191 functions as the Proton acceptor in the catalytic mechanism. Arginine 255 is a binding site for NADPH. The NADPH site is built by valine 279 and glutamate 281.

This sequence belongs to the NAD-dependent glycerol-3-phosphate dehydrogenase family.

Its subcellular location is the cytoplasm. It carries out the reaction sn-glycerol 3-phosphate + NAD(+) = dihydroxyacetone phosphate + NADH + H(+). It catalyses the reaction sn-glycerol 3-phosphate + NADP(+) = dihydroxyacetone phosphate + NADPH + H(+). The protein operates within membrane lipid metabolism; glycerophospholipid metabolism. Functionally, catalyzes the reduction of the glycolytic intermediate dihydroxyacetone phosphate (DHAP) to sn-glycerol 3-phosphate (G3P), the key precursor for phospholipid synthesis. The sequence is that of Glycerol-3-phosphate dehydrogenase [NAD(P)+] from Ectopseudomonas mendocina (strain ymp) (Pseudomonas mendocina).